A 64-amino-acid polypeptide reads, in one-letter code: UPF0434 protein TERTU_2813 (64 aa).

It belongs to the UPF0434 family.

The sequence is that of UPF0434 protein TERTU_2813 from Teredinibacter turnerae (strain ATCC 39867 / T7901).